The chain runs to 875 residues: Neurotrypsin (875 aa).

The first 20 residues, 1-20 (MTLARFVLALVLGALPEVVG), serve as a signal peptide directing secretion. The N-linked (GlcNAc...) asparagine glycan is linked to asparagine 26. A disordered region spans residues 30 to 87 (HHRHRHSPPPGPQYPYYLPTHQRPPRTRPPPPLPRFPRPPRALPAQRPHALQAGHTPR). Over residues 56-71 (TRPPPPLPRFPRPPRA) the composition is skewed to pro residues. A Kringle domain is found at 93-165 (CPAGELWVSV…GKVDWGYCDC (73 aa)). Disulfide bonds link cysteine 93-cysteine 165, cysteine 109-cysteine 149, cysteine 138-cysteine 163, cysteine 195-cysteine 259, cysteine 208-cysteine 269, cysteine 239-cysteine 249, cysteine 305-cysteine 369, cysteine 318-cysteine 379, cysteine 349-cysteine 359, cysteine 412-cysteine 475, cysteine 425-cysteine 485, cysteine 455-cysteine 465, cysteine 525-cysteine 589, cysteine 538-cysteine 599, cysteine 569-cysteine 579, cysteine 619-cysteine 750, cysteine 661-cysteine 677, cysteine 765-cysteine 831, cysteine 794-cysteine 808, and cysteine 821-cysteine 850. 4 SRCR domains span residues 170-271 (VRLR…TCSF), 280-381 (IRLV…SCTP), 387-487 (IRLA…ACYP), and 500-601 (VRLM…ICDY). The tract at residues 619–630 (CGLRLLHRRQKR) is zymogen activation region. In terms of domain architecture, Peptidase S1 spans 631-874 (IIGGKNSLRG…FVPWIKSVTK (244 aa)). The active-site Charge relay system is histidine 676. A glycan (N-linked (GlcNAc...) asparagine) is linked at asparagine 683. Catalysis depends on aspartate 726, which acts as the Charge relay system. Serine 825 serves as the catalytic Charge relay system.

Belongs to the peptidase S1 family.

The protein localises to the secreted. Plays a role in neuronal plasticity and the proteolytic action may subserve structural reorganizations associated with learning and memory operations. The polypeptide is Neurotrypsin (PRSS12) (Macaca mulatta (Rhesus macaque)).